Consider the following 205-residue polypeptide: Anaerobic dimethyl sulfoxide reductase chain B (205 aa).

4Fe-4S ferredoxin-type domains are found at residues 4–32, 57–89, and 90–119; these read YGFY…LGTE, NIFA…KNAD, and GFVI…YDAQ. The [4Fe-4S] cluster site is built by C13, C16, C19, C23, C67, C70, C75, C79, C99, C102, C105, C109, C126, C129, C141, and C145.

Heterotrimeric enzyme composed of a catalytic heterodimer (DmsAB) and a membrane anchor protein (DmsC). It depends on [4Fe-4S] cluster as a cofactor.

Functionally, electron transfer subunit of the terminal reductase during anaerobic growth on various sulfoxide and N-oxide compounds. This is Anaerobic dimethyl sulfoxide reductase chain B (dmsB) from Haemophilus influenzae (strain ATCC 51907 / DSM 11121 / KW20 / Rd).